Consider the following 430-residue polypeptide: Ribosomal protein uS12 methylthiotransferase RimO (430 aa).

The MTTase N-terminal domain occupies 1-116; the sequence is MRVGIKVLGC…IANAIENGTD (116 aa). The [4Fe-4S] cluster site is built by cysteine 10, cysteine 46, cysteine 79, cysteine 148, cysteine 152, and cysteine 155. Residues 134–365 form the Radical SAM core domain; it reads LEERPYAYVK…LLQAEISNSR (232 aa). Residues 367 to 430 enclose the TRAM domain; it reads DRFVGKKLKF…DEYDMWGSVI (64 aa).

It belongs to the methylthiotransferase family. RimO subfamily. [4Fe-4S] cluster is required as a cofactor.

The protein resides in the cytoplasm. It carries out the reaction L-aspartate(89)-[ribosomal protein uS12]-hydrogen + (sulfur carrier)-SH + AH2 + 2 S-adenosyl-L-methionine = 3-methylsulfanyl-L-aspartate(89)-[ribosomal protein uS12]-hydrogen + (sulfur carrier)-H + 5'-deoxyadenosine + L-methionine + A + S-adenosyl-L-homocysteine + 2 H(+). Its function is as follows. Catalyzes the methylthiolation of an aspartic acid residue of ribosomal protein uS12. In Thermotoga petrophila (strain ATCC BAA-488 / DSM 13995 / JCM 10881 / RKU-1), this protein is Ribosomal protein uS12 methylthiotransferase RimO.